The primary structure comprises 204 residues: Transmembrane protein 253 (204 aa).

A run of 4 helical transmembrane segments spans residues L33 to V53, L62 to L82, M96 to M116, and L138 to L158. Residues E184–E204 form a disordered region.

The protein localises to the membrane. The protein is Transmembrane protein 253 (Tmem253) of Mus musculus (Mouse).